A 165-amino-acid polypeptide reads, in one-letter code: Chemotaxis protein CheW (165 aa).

This sequence belongs to the CheW family.

Its function is as follows. Plays an essential role in chemotaxis signal transduction system in order to colonize the host stomach. This is Chemotaxis protein CheW from Helicobacter pylori (strain ATCC 700392 / 26695) (Campylobacter pylori).